The sequence spans 615 residues: Melanopsin-B (615 aa).

Topologically, residues 1–19 (MDMDRGFYRKVDVPDHAHY) are extracellular. A helical transmembrane segment spans residues 20-40 (VIAFFVLIIGVVGVTGNALVM). At 41 to 56 (YAFLCNKKLRTPPNYF) the chain is on the cytoplasmic side. The helical transmembrane segment at 57–77 (IMNLAVSDFLMAITQSPIFFI) threads the bilayer. Residues 78-93 (NSLFKEWIFGETGCRM) are Extracellular-facing. A disulfide bond links Cys-91 and Cys-169. Residues 94–114 (YAFCGALFGITSMINLLAISL) form a helical membrane-spanning segment. Topologically, residues 115–136 (DRYIVITKPPQAIRWVSGRRTM) are cytoplasmic. Residues 137–157 (VVILLVWLYSLAWSLAPLLGW) form a helical membrane-spanning segment. At 158–189 (SSYIPEGLMTSCTWDYVTSTPANKGYTLMLCC) the chain is on the extracellular side. A helical membrane pass occupies residues 190–210 (FVFFIPLGIISYCYLCMFLAI). Over 211–244 (RSAGREIERLGTQVRKSTLMQQQTIKTEWKLTKV) the chain is Cytoplasmic. A helical membrane pass occupies residues 245 to 265 (AFVVIIVYVHSWSPYACVTLI). At 266–279 (AWAGYGSHLSPYSK) the chain is on the extracellular side. Residues 280-300 (AVPAVIAKASAIYNPFIYAII) traverse the membrane as a helical segment. An N6-(retinylidene)lysine modification is found at Lys-287. Residues 301-615 (HSKYRDTLAE…RNLEESFMAL (315 aa)) are Cytoplasmic-facing. 2 disordered regions span residues 390–420 (LGRSKEHRGPPAQQNRQTRSSDTLEQATVAD) and 465–502 (NKHPNNNHKNHNNRHNGNNNNEEHEYSGKGGRHCQNHP). Polar residues predominate over residues 401–415 (AQQNRQTRSSDTLEQ). Residues 469-478 (NNNHKNHNNR) show a composition bias toward basic residues.

The protein belongs to the G-protein coupled receptor 1 family. Opsin subfamily. In terms of tissue distribution, expressed in the inner nuclear layer of the retina, possibly in amacrine and ganglion cells. Expressed in a subpopulation of neurons in the dorsal habenula.

The protein localises to the cell membrane. In terms of biological role, photoreceptor implicated in non-image-forming responses to light. The polypeptide is Melanopsin-B (opn4b) (Gadus morhua (Atlantic cod)).